A 298-amino-acid chain; its full sequence is Acetylglutamate kinase (298 aa).

Residues 68-69, Arg90, and Asn195 each bind substrate; that span reads GG.

The protein belongs to the acetylglutamate kinase family. ArgB subfamily.

The protein resides in the cytoplasm. The catalysed reaction is N-acetyl-L-glutamate + ATP = N-acetyl-L-glutamyl 5-phosphate + ADP. The protein operates within amino-acid biosynthesis; L-arginine biosynthesis; N(2)-acetyl-L-ornithine from L-glutamate: step 2/4. Its function is as follows. Catalyzes the ATP-dependent phosphorylation of N-acetyl-L-glutamate. The protein is Acetylglutamate kinase of Hydrogenovibrio crunogenus (strain DSM 25203 / XCL-2) (Thiomicrospira crunogena).